Consider the following 122-residue polypeptide: Large ribosomal subunit protein uL14 (122 aa).

Belongs to the universal ribosomal protein uL14 family. Part of the 50S ribosomal subunit. Forms a cluster with proteins L3 and L19. In the 70S ribosome, L14 and L19 interact and together make contacts with the 16S rRNA in bridges B5 and B8.

Its function is as follows. Binds to 23S rRNA. Forms part of two intersubunit bridges in the 70S ribosome. This is Large ribosomal subunit protein uL14 from Shewanella amazonensis (strain ATCC BAA-1098 / SB2B).